A 137-amino-acid polypeptide reads, in one-letter code: Large ribosomal subunit protein uL14A (137 aa).

Ser2 carries the post-translational modification N-acetylserine. Lys106 and Lys110 each carry N6,N6-dimethyllysine; by RKM1.

This sequence belongs to the universal ribosomal protein uL14 family. Component of the large ribosomal subunit (LSU). Mature yeast ribosomes consist of a small (40S) and a large (60S) subunit. The 40S small subunit contains 1 molecule of ribosomal RNA (18S rRNA) and 33 different proteins (encoded by 57 genes). The large 60S subunit contains 3 rRNA molecules (25S, 5.8S and 5S rRNA) and 46 different proteins (encoded by 81 genes). Post-translationally, methylated by RKM1 at 2 different sites, but it is unclear which are the 2 methylated residues among Lys-40, Lys-106 and/or Lys-110.

The protein localises to the cytoplasm. Component of the ribosome, a large ribonucleoprotein complex responsible for the synthesis of proteins in the cell. The small ribosomal subunit (SSU) binds messenger RNAs (mRNAs) and translates the encoded message by selecting cognate aminoacyl-transfer RNA (tRNA) molecules. The large subunit (LSU) contains the ribosomal catalytic site termed the peptidyl transferase center (PTC), which catalyzes the formation of peptide bonds, thereby polymerizing the amino acids delivered by tRNAs into a polypeptide chain. The nascent polypeptides leave the ribosome through a tunnel in the LSU and interact with protein factors that function in enzymatic processing, targeting, and the membrane insertion of nascent chains at the exit of the ribosomal tunnel. In Saccharomyces cerevisiae (strain ATCC 204508 / S288c) (Baker's yeast), this protein is Large ribosomal subunit protein uL14A.